Consider the following 404-residue polypeptide: Probable pectate lyase 18 (404 aa).

Positions Met1–Ser20 are cleaved as a signal peptide. Asn37 is a glycosylation site (N-linked (GlcNAc...) asparagine). Residues Cys159 and Cys178 are joined by a disulfide bond. An N-linked (GlcNAc...) asparagine glycan is attached at Asn191. Ca(2+) contacts are provided by Asp200, Asp202, Asp224, and Asp228. The active site involves Arg280.

It belongs to the polysaccharide lyase 1 family. Ca(2+) serves as cofactor. Predominantly found in the pistil where it is found in the outer five layers of the strands of transmitting tissue within the upper two-thirds of the style. Found at much lower levels in the anthers and vegetative organs.

The protein resides in the secreted. The enzyme catalyses Eliminative cleavage of (1-&gt;4)-alpha-D-galacturonan to give oligosaccharides with 4-deoxy-alpha-D-galact-4-enuronosyl groups at their non-reducing ends.. The protein operates within glycan metabolism; pectin degradation; 2-dehydro-3-deoxy-D-gluconate from pectin: step 2/5. In terms of biological role, may have a role in the development of the transmitting tissue of the style and/or in the events related to pollination such as some aspect in the facilitation of compatible pollen tube growth. This chain is Probable pectate lyase 18, found in Solanum lycopersicum (Tomato).